We begin with the raw amino-acid sequence, 72 residues long: MAKDDVIEIDGNVVEALPNATFKVELDNKHIILCHIAGKMRMHYIKIMPGDRVKVELTPYSLDKGRITYRYK.

An S1-like domain is found at 1-72; it reads MAKDDVIEID…DKGRITYRYK (72 aa).

It belongs to the IF-1 family. In terms of assembly, component of the 30S ribosomal translation pre-initiation complex which assembles on the 30S ribosome in the order IF-2 and IF-3, IF-1 and N-formylmethionyl-tRNA(fMet); mRNA recruitment can occur at any time during PIC assembly.

Its subcellular location is the cytoplasm. Its function is as follows. One of the essential components for the initiation of protein synthesis. Stabilizes the binding of IF-2 and IF-3 on the 30S subunit to which N-formylmethionyl-tRNA(fMet) subsequently binds. Helps modulate mRNA selection, yielding the 30S pre-initiation complex (PIC). Upon addition of the 50S ribosomal subunit IF-1, IF-2 and IF-3 are released leaving the mature 70S translation initiation complex. This chain is Translation initiation factor IF-1, found in Campylobacter fetus subsp. fetus (strain 82-40).